A 469-amino-acid polypeptide reads, in one-letter code: Probable acetate kinase (469 aa).

Asn30 provides a ligand contact to Mg(2+). Lys37 provides a ligand contact to ATP. Residue Arg122 coordinates substrate. Asp179 acts as the Proton donor/acceptor in catalysis. Position 239 to 243 (239 to 243 (HLGSG)) interacts with ATP. Glu453 contributes to the Mg(2+) binding site.

It belongs to the acetokinase family. Mg(2+) serves as cofactor.

The enzyme catalyses acetate + ATP = acetyl phosphate + ADP. It functions in the pathway metabolic intermediate biosynthesis; acetyl-CoA biosynthesis; acetyl-CoA from acetate: step 1/2. This Neurospora crassa (strain ATCC 24698 / 74-OR23-1A / CBS 708.71 / DSM 1257 / FGSC 987) protein is Probable acetate kinase.